Here is a 73-residue protein sequence, read N- to C-terminus: Antitoxin VapB2 (73 aa).

As to quaternary structure, forms a homodimer, which binds to a toxin homodimer, which then oligomerizes further to a hetero-octamer. When bound to toxin VapC2 the toxin activity is inhibited; 1 antitoxin may suffice to inhibit toxin.

Its function is as follows. Antitoxin component of a type II toxin-antitoxin (TA) system. Upon expression in M.smegmatis neutralizes the effect of cognate toxin VapC2. The C-terminal helix of the antitoxin may obstruct the toxin's RNA-binding groove, blocking access to the active sites. Additionally, the C-terminal arginine of the antitoxin may remove Mg(2+) ions from the toxin active sites. The protein is Antitoxin VapB2 (vapB2) of Mycobacterium tuberculosis (strain ATCC 25618 / H37Rv).